A 296-amino-acid polypeptide reads, in one-letter code: Bifunctional protein FolD (296 aa).

NADP(+) contacts are provided by residues Gly169–Gly171, Thr196, and Val237.

Belongs to the tetrahydrofolate dehydrogenase/cyclohydrolase family. As to quaternary structure, homodimer.

It catalyses the reaction (6R)-5,10-methylene-5,6,7,8-tetrahydrofolate + NADP(+) = (6R)-5,10-methenyltetrahydrofolate + NADPH. The enzyme catalyses (6R)-5,10-methenyltetrahydrofolate + H2O = (6R)-10-formyltetrahydrofolate + H(+). Its pathway is one-carbon metabolism; tetrahydrofolate interconversion. Its function is as follows. Catalyzes the oxidation of 5,10-methylenetetrahydrofolate to 5,10-methenyltetrahydrofolate and then the hydrolysis of 5,10-methenyltetrahydrofolate to 10-formyltetrahydrofolate. This is Bifunctional protein FolD from Kocuria rhizophila (strain ATCC 9341 / DSM 348 / NBRC 103217 / DC2201).